A 350-amino-acid polypeptide reads, in one-letter code: Serine-threonine kinase receptor-associated protein (350 aa).

WD repeat units lie at residues G12–L56, G57–T96, A98–K137, G141–S179, L180–V212, E221–K262, and G263–L302. S312, S335, and S338 each carry phosphoserine. Residues A326–A350 are disordered. Positions N337–A350 are enriched in polar residues. Y342 bears the Phosphotyrosine mark.

This sequence belongs to the WD repeat STRAP family. As to quaternary structure, part of the core SMN complex that contains SMN1, GEMIN2/SIP1, DDX20/GEMIN3, GEMIN4, GEMIN5, GEMIN6, GEMIN7, GEMIN8 and STRAP/UNRIP. Part of the SMN-Sm complex that contains SMN1, GEMIN2/SIP1, DDX20/GEMIN3, GEMIN4, GEMIN5, GEMIN6, GEMIN7, GEMIN8, STRAP/UNRIP and the Sm proteins SNRPB, SNRPD1, SNRPD2, SNRPD3, SNRPE, SNRPF and SNRPG. Interacts directly with GEMIN6 and GEMIN7. Associates with the SMN complex in the cytoplasm but not in the nucleus. Also interacts with CSDE1/UNR and MAWBP. Interacts with PDPK1. Interacts with TRIM48.

The protein resides in the cytoplasm. It localises to the nucleus. In terms of biological role, the SMN complex catalyzes the assembly of small nuclear ribonucleoproteins (snRNPs), the building blocks of the spliceosome, and thereby plays an important role in the splicing of cellular pre-mRNAs. Most spliceosomal snRNPs contain a common set of Sm proteins SNRPB, SNRPD1, SNRPD2, SNRPD3, SNRPE, SNRPF and SNRPG that assemble in a heptameric protein ring on the Sm site of the small nuclear RNA to form the core snRNP (Sm core). In the cytosol, the Sm proteins SNRPD1, SNRPD2, SNRPE, SNRPF and SNRPG are trapped in an inactive 6S pICln-Sm complex by the chaperone CLNS1A that controls the assembly of the core snRNP. To assemble core snRNPs, the SMN complex accepts the trapped 5Sm proteins from CLNS1A forming an intermediate. Binding of snRNA inside 5Sm triggers eviction of the SMN complex, thereby allowing binding of SNRPD3 and SNRPB to complete assembly of the core snRNP. STRAP plays a role in the cellular distribution of the SMN complex. Negatively regulates TGF-beta signaling but positively regulates the PDPK1 kinase activity by enhancing its autophosphorylation and by significantly reducing the association of PDPK1 with 14-3-3 protein. This Rattus norvegicus (Rat) protein is Serine-threonine kinase receptor-associated protein (Strap).